The chain runs to 297 residues: Aspartate carbamoyltransferase catalytic subunit (297 aa).

Carbamoyl phosphate is bound by residues arginine 49 and threonine 50. Lysine 77 contributes to the L-aspartate binding site. Carbamoyl phosphate is bound by residues arginine 99, histidine 129, and glutamine 132. Residues arginine 162 and arginine 215 each contribute to the L-aspartate site. The carbamoyl phosphate site is built by glycine 256 and proline 257.

This sequence belongs to the aspartate/ornithine carbamoyltransferase superfamily. ATCase family. As to quaternary structure, heterododecamer (2C3:3R2) of six catalytic PyrB chains organized as two trimers (C3), and six regulatory PyrI chains organized as three dimers (R2).

The enzyme catalyses carbamoyl phosphate + L-aspartate = N-carbamoyl-L-aspartate + phosphate + H(+). It participates in pyrimidine metabolism; UMP biosynthesis via de novo pathway; (S)-dihydroorotate from bicarbonate: step 2/3. In terms of biological role, catalyzes the condensation of carbamoyl phosphate and aspartate to form carbamoyl aspartate and inorganic phosphate, the committed step in the de novo pyrimidine nucleotide biosynthesis pathway. The polypeptide is Aspartate carbamoyltransferase catalytic subunit (Legionella pneumophila (strain Paris)).